The following is a 202-amino-acid chain: Oligoribonuclease (202 aa).

In terms of domain architecture, Exonuclease spans 2-166 (LVWIDCEMTG…ADIQESIEEL (165 aa)). The active site involves Tyr-123.

The protein belongs to the oligoribonuclease family.

Its subcellular location is the cytoplasm. Functionally, 3'-to-5' exoribonuclease specific for small oligoribonucleotides. The sequence is that of Oligoribonuclease from Cutibacterium acnes (strain DSM 16379 / KPA171202) (Propionibacterium acnes).